The sequence spans 479 residues: Catalase A (479 aa).

His-63 is a catalytic residue. Heme is bound at residue Tyr-346.

Belongs to the catalase family. Heme serves as cofactor.

The protein resides in the peroxisome matrix. It catalyses the reaction 2 H2O2 = O2 + 2 H2O. In terms of biological role, catalyzes the degradation of hydrogen peroxide (H(2)O(2)) generated by peroxisomal oxidases to water and oxygen, thereby protecting cells from the toxic effects of hydrogen peroxide. The protein is Catalase A (catA) of Botryotinia fuckeliana (Noble rot fungus).